A 350-amino-acid chain; its full sequence is 4-hydroxy-3-methylbut-2-enyl diphosphate reductase (350 aa).

Cysteine 19 provides a ligand contact to [4Fe-4S] cluster. Positions 48 and 84 each coordinate (2E)-4-hydroxy-3-methylbut-2-enyl diphosphate. Dimethylallyl diphosphate contacts are provided by histidine 48 and histidine 84. The isopentenyl diphosphate site is built by histidine 48 and histidine 84. Cysteine 106 is a [4Fe-4S] cluster binding site. (2E)-4-hydroxy-3-methylbut-2-enyl diphosphate is bound at residue histidine 134. Histidine 134 lines the dimethylallyl diphosphate pocket. Isopentenyl diphosphate is bound at residue histidine 134. Glutamate 136 functions as the Proton donor in the catalytic mechanism. Threonine 175 is a (2E)-4-hydroxy-3-methylbut-2-enyl diphosphate binding site. Cysteine 205 is a binding site for [4Fe-4S] cluster. 4 residues coordinate (2E)-4-hydroxy-3-methylbut-2-enyl diphosphate: serine 233, serine 234, asparagine 235, and serine 278. Residues serine 233, serine 234, asparagine 235, and serine 278 each coordinate dimethylallyl diphosphate. Serine 233, serine 234, asparagine 235, and serine 278 together coordinate isopentenyl diphosphate.

The protein belongs to the IspH family. The cofactor is [4Fe-4S] cluster.

It catalyses the reaction isopentenyl diphosphate + 2 oxidized [2Fe-2S]-[ferredoxin] + H2O = (2E)-4-hydroxy-3-methylbut-2-enyl diphosphate + 2 reduced [2Fe-2S]-[ferredoxin] + 2 H(+). The enzyme catalyses dimethylallyl diphosphate + 2 oxidized [2Fe-2S]-[ferredoxin] + H2O = (2E)-4-hydroxy-3-methylbut-2-enyl diphosphate + 2 reduced [2Fe-2S]-[ferredoxin] + 2 H(+). It participates in isoprenoid biosynthesis; dimethylallyl diphosphate biosynthesis; dimethylallyl diphosphate from (2E)-4-hydroxy-3-methylbutenyl diphosphate: step 1/1. It functions in the pathway isoprenoid biosynthesis; isopentenyl diphosphate biosynthesis via DXP pathway; isopentenyl diphosphate from 1-deoxy-D-xylulose 5-phosphate: step 6/6. In terms of biological role, catalyzes the conversion of 1-hydroxy-2-methyl-2-(E)-butenyl 4-diphosphate (HMBPP) into a mixture of isopentenyl diphosphate (IPP) and dimethylallyl diphosphate (DMAPP). Acts in the terminal step of the DOXP/MEP pathway for isoprenoid precursor biosynthesis. The sequence is that of 4-hydroxy-3-methylbut-2-enyl diphosphate reductase from Brucella anthropi (strain ATCC 49188 / DSM 6882 / CCUG 24695 / JCM 21032 / LMG 3331 / NBRC 15819 / NCTC 12168 / Alc 37) (Ochrobactrum anthropi).